Consider the following 258-residue polypeptide: Regulatory protein RecX (258 aa).

This sequence belongs to the RecX family.

The protein resides in the cytoplasm. Its function is as follows. Modulates RecA activity. The sequence is that of Regulatory protein RecX from Streptococcus pneumoniae (strain JJA).